The chain runs to 683 residues: Multidrug resistance protein MdtO (683 aa).

9 helical membrane-spanning segments follow: residues V43 to F63, F75 to Y95, G100 to M120, L125 to M145, W158 to F178, F402 to W422, I426 to S446, M457 to V477, and A483 to E503.

It belongs to the MdtO family. In terms of assembly, could be part of a tripartite efflux system composed of MdtN, MdtO and MdtP.

Its subcellular location is the cell inner membrane. Could be involved in resistance to puromycin, acriflavine and tetraphenylarsonium chloride. The polypeptide is Multidrug resistance protein MdtO (mdtO) (Escherichia coli O157:H7).